Here is a 353-residue protein sequence, read N- to C-terminus: Photosystem II protein D1 (353 aa).

Thr2 is subject to N-acetylthreonine. Thr2 carries the phosphothreonine modification. 3 consecutive transmembrane segments (helical) span residues 29–46, 118–133, and 142–156; these read YIGWFGVLMIPTLLTATS, HFLLGVACYMGREWEL, and WIAVAYSAPVAAATA. A chlorophyll a-binding site is contributed by His118. Pheophytin a is bound at residue Tyr126. Residues Asp170 and Glu189 each coordinate [CaMn4O5] cluster. Residues 197-218 form a helical membrane-spanning segment; the sequence is FHMLGVAGVFGGSLFSAMHGSL. His198 contributes to the chlorophyll a binding site. Residues His215 and 264–265 contribute to the a quinone site; that span reads SF. His215 contributes to the Fe cation binding site. His272 provides a ligand contact to Fe cation. The helical transmembrane segment at 274-288 threads the bilayer; it reads FLAAWPVVGIWFTAL. Positions 332, 333, 342, and 344 each coordinate [CaMn4O5] cluster. The propeptide occupies 345 to 353; sequence AVEAPSING.

This sequence belongs to the reaction center PufL/M/PsbA/D family. As to quaternary structure, PSII is composed of 1 copy each of membrane proteins PsbA, PsbB, PsbC, PsbD, PsbE, PsbF, PsbH, PsbI, PsbJ, PsbK, PsbL, PsbM, PsbT, PsbX, PsbY, PsbZ, Psb30/Ycf12, at least 3 peripheral proteins of the oxygen-evolving complex and a large number of cofactors. It forms dimeric complexes. Requires The D1/D2 heterodimer binds P680, chlorophylls that are the primary electron donor of PSII, and subsequent electron acceptors. It shares a non-heme iron and each subunit binds pheophytin, quinone, additional chlorophylls, carotenoids and lipids. D1 provides most of the ligands for the Mn4-Ca-O5 cluster of the oxygen-evolving complex (OEC). There is also a Cl(-1) ion associated with D1 and D2, which is required for oxygen evolution. The PSII complex binds additional chlorophylls, carotenoids and specific lipids. as cofactor. Post-translationally, tyr-161 forms a radical intermediate that is referred to as redox-active TyrZ, YZ or Y-Z. C-terminally processed by CTPA; processing is essential to allow assembly of the oxygen-evolving complex and thus photosynthetic growth.

It localises to the plastid. The protein resides in the chloroplast thylakoid membrane. It carries out the reaction 2 a plastoquinone + 4 hnu + 2 H2O = 2 a plastoquinol + O2. Functionally, photosystem II (PSII) is a light-driven water:plastoquinone oxidoreductase that uses light energy to abstract electrons from H(2)O, generating O(2) and a proton gradient subsequently used for ATP formation. It consists of a core antenna complex that captures photons, and an electron transfer chain that converts photonic excitation into a charge separation. The D1/D2 (PsbA/PsbD) reaction center heterodimer binds P680, the primary electron donor of PSII as well as several subsequent electron acceptors. In Illicium oligandrum (Star anise), this protein is Photosystem II protein D1.